The chain runs to 218 residues: RNA polymerase sigma-H factor (218 aa).

Residues 62-75 (DIVQEGMIGLYKSI) carry the Polymerase core binding motif. The H-T-H motif DNA-binding region spans 182–201 (YQEISDELNRHVKSIDNALQ).

It belongs to the sigma-70 factor family. As to quaternary structure, interacts transiently with the RNAP core.

Sigma factors are initiation factors that promote the attachment of RNA polymerase (RNAP) to specific initiation sites and are then released. This sigma factor is involved in the transition to post-exponential phase in the beginning of sporulation. It is also required for transcription of several stationary phase genes. Association with the RNAP core increases rapidly in early exponential phase, and reamins constant expression level after. The protein is RNA polymerase sigma-H factor (sigH) of Bacillus subtilis (strain 168).